We begin with the raw amino-acid sequence, 928 residues long: ATP-dependent DNA helicase PIF5 (928 aa).

Residues 1-49 (MLSRLSAVWRPSRVALRIQRVDFTTCGNRLNRSTQPNEPPLVSGIAARS) constitute a mitochondrion transit peptide. Disordered stretches follow at residues 29-141 (RLNR…DVAI) and 176-231 (LRAK…FSDA). Over residues 52-61 (AKAEPVEKRG) the composition is skewed to basic and acidic residues. ATP is bound at residue 264–271 (GGAGSGKS). Disordered regions lie at residues 389–421 (PIPPRNKPQQKTEENAEAQEGGDPTDGTPAPSK), 481–513 (KSSAKSRKKKDEDAGNDGVLPLTDAETTPAAAE), 545–572 (IYPSPNDGSSQQTGSSNGANSVTEEDTM), and 585–607 (STHETEPETTEETTTGTQPSQPW). Residues 550–566 (NDGSSQQTGSSNGANSV) are compositionally biased toward polar residues. A DNA-binding region spans residues 858–877 (QAYVALSRSTRLDNIRLLDF). The interval 898 to 928 (EELDNEIEDDGTEGDEEALEGDGEYEGEVEE) is disordered.

Belongs to the helicase family. PIF1 subfamily. As to quaternary structure, monomer. Mg(2+) is required as a cofactor.

The protein resides in the mitochondrion. The catalysed reaction is Couples ATP hydrolysis with the unwinding of duplex DNA at the replication fork by translocating in the 5'-3' direction. This creates two antiparallel DNA single strands (ssDNA). The leading ssDNA polymer is the template for DNA polymerase III holoenzyme which synthesizes a continuous strand.. The enzyme catalyses ATP + H2O = ADP + phosphate + H(+). DNA-dependent ATPase and 5'-3' DNA helicase required for the maintenance of mitochondrial (kinetoplast) genome stability. Involved in processing of minicircle Okazaki fragments. The sequence is that of ATP-dependent DNA helicase PIF5 from Trypanosoma brucei brucei (strain 927/4 GUTat10.1).